The sequence spans 208 residues: Protein-L-isoaspartate O-methyltransferase (208 aa).

Residue Ser-59 is part of the active site.

It belongs to the methyltransferase superfamily. L-isoaspartyl/D-aspartyl protein methyltransferase family.

Its subcellular location is the cytoplasm. The catalysed reaction is [protein]-L-isoaspartate + S-adenosyl-L-methionine = [protein]-L-isoaspartate alpha-methyl ester + S-adenosyl-L-homocysteine. Its function is as follows. Catalyzes the methyl esterification of L-isoaspartyl residues in peptides and proteins that result from spontaneous decomposition of normal L-aspartyl and L-asparaginyl residues. It plays a role in the repair and/or degradation of damaged proteins. The sequence is that of Protein-L-isoaspartate O-methyltransferase from Escherichia fergusonii (strain ATCC 35469 / DSM 13698 / CCUG 18766 / IAM 14443 / JCM 21226 / LMG 7866 / NBRC 102419 / NCTC 12128 / CDC 0568-73).